The primary structure comprises 513 residues: Xylose import ATP-binding protein XylG (513 aa).

ABC transporter domains lie at 5-242 (LEMK…VERE) and 259-505 (LRIE…LRSE). Residue 37-44 (GENGSGKS) participates in ATP binding.

It belongs to the ABC transporter superfamily. Xylose importer (TC 3.A.1.2.4) family. In terms of assembly, the complex is composed of two ATP-binding proteins (XylG), two transmembrane proteins (XylH) and a solute-binding protein (XylF).

It is found in the cell inner membrane. The enzyme catalyses D-xylose(out) + ATP + H2O = D-xylose(in) + ADP + phosphate + H(+). Part of the ABC transporter complex XylFGH involved in xylose import. Responsible for energy coupling to the transport system. The polypeptide is Xylose import ATP-binding protein XylG (Shigella flexneri).